The primary structure comprises 394 residues: Protein TsgA homolog (394 aa).

12 helical membrane passes run 11 to 31 (WISF…GMVM), 51 to 71 (FLNA…EIVP), 78 to 98 (FGFV…SIAL), 101 to 121 (VSMF…TFLI), 134 to 154 (LLFT…VAAV), 162 to 182 (WYWV…LTFG), 206 to 226 (IGVL…LGFI), 250 to 270 (FWMS…FFDL), 273 to 293 (ILTV…NGAP), 297 to 317 (AWFI…IITL), 332 to 352 (FVLT…GPIV), and 361 to 381 (LQTA…LGFV).

The protein belongs to the major facilitator superfamily. TsgA family.

The protein localises to the cell inner membrane. The chain is Protein TsgA homolog from Enterobacter sp. (strain 638).